The chain runs to 503 residues: Aminoaldehyde dehydrogenase 2, peroxisomal (503 aa).

Residues isoleucine 28 and aspartate 99 each coordinate Na(+). NAD(+)-binding residues include tryptophan 161 and lysine 185. Residue leucine 189 coordinates Na(+). Serine 239 is an NAD(+) binding site. Catalysis depends on glutamate 260, which acts as the Proton acceptor. The active-site Nucleophile is cysteine 294. The short motif at 501–503 (AKL) is the Microbody targeting signal element.

This sequence belongs to the aldehyde dehydrogenase family. As to quaternary structure, forms homodimers.

Its subcellular location is the peroxisome. The enzyme catalyses 3-aminopropanal + NAD(+) + H2O = beta-alanine + NADH + 2 H(+). It carries out the reaction 4-aminobutanal + NAD(+) + H2O = 4-aminobutanoate + NADH + 2 H(+). The catalysed reaction is 4-guanidinobutanal + NAD(+) + H2O = 4-guanidinobutanoate + NADH + 2 H(+). It participates in amine and polyamine biosynthesis; betaine biosynthesis via choline pathway; betaine from betaine aldehyde: step 1/1. In terms of biological role, dehydrogenase that catalyzes the oxidation of several aminoaldehydes. Metabolizes and detoxifies aldehyde products of polyamine degradation to non-toxic amino acids. Catalyzes the oxidation of 3-aminopropanal to beta-alanine. Catalyzes the oxidation of 4-aminobutanal to 4-aminobutanoate. Catalyzes the oxidation of 4-guanidinobutanal to 4-guanidinobutanoate. The protein is Aminoaldehyde dehydrogenase 2, peroxisomal of Pisum sativum (Garden pea).